The primary structure comprises 102 residues: NADH-quinone oxidoreductase subunit K (102 aa).

3 consecutive transmembrane segments (helical) span residues 6 to 26 (MHHGLLLAAILFALGMIGILV), 30 to 50 (LIFILMSIEIMLNAAGLAFVV), and 64 to 84 (FIFILSVAAAEVSVGLALLLL).

This sequence belongs to the complex I subunit 4L family. In terms of assembly, NDH-1 is composed of 14 different subunits. Subunits NuoA, H, J, K, L, M, N constitute the membrane sector of the complex.

Its subcellular location is the cell inner membrane. It carries out the reaction a quinone + NADH + 5 H(+)(in) = a quinol + NAD(+) + 4 H(+)(out). Functionally, NDH-1 shuttles electrons from NADH, via FMN and iron-sulfur (Fe-S) centers, to quinones in the respiratory chain. The immediate electron acceptor for the enzyme in this species is believed to be ubiquinone. Couples the redox reaction to proton translocation (for every two electrons transferred, four hydrogen ions are translocated across the cytoplasmic membrane), and thus conserves the redox energy in a proton gradient. This Nitrosospira multiformis (strain ATCC 25196 / NCIMB 11849 / C 71) protein is NADH-quinone oxidoreductase subunit K.